The following is a 49-amino-acid chain: Feruloyl esterase A (49 aa).

This sequence belongs to the AB hydrolase superfamily. FaeA family.

It localises to the secreted. It carries out the reaction feruloyl-polysaccharide + H2O = ferulate + polysaccharide.. Functionally, involved in degradation of plant cell walls. Hydrolyzes the feruloyl-arabinose ester bond in arabinoxylans as well as the feruloyl-galactose and feruloyl-arabinose ester bonds in pectin. Active against methyl esters of sinapate (MSA), but not caffeate (MCA). In Talaromyces stipitatus (strain ATCC 10500 / CBS 375.48 / QM 6759 / NRRL 1006) (Penicillium stipitatum), this protein is Feruloyl esterase A.